We begin with the raw amino-acid sequence, 218 residues long: MGQKVNPVGLRIGVIRDWESKWYAGKDYADFLHEDLKIREFISKRLSDASVSKVEIERAANRVNITIHTAKPGMVIGKGGSEVEALRKALNSLTGKRVHINILEIKRADLDAQLVADNIARQLENRISFRRAQKQQIQRTMRAGAQGVKTMVSGRLGGADIARSEYYSEGTVPLHTLRADIDYATSEADTTYGKLGVKVWIYRGEVLPTKKKTEEGGK.

The KH type-2 domain maps to Ile38 to Lys106.

The protein belongs to the universal ribosomal protein uS3 family. Part of the 30S ribosomal subunit. Forms a tight complex with proteins S10 and S14.

Functionally, binds the lower part of the 30S subunit head. Binds mRNA in the 70S ribosome, positioning it for translation. This chain is Small ribosomal subunit protein uS3, found in Bacillus velezensis (strain DSM 23117 / BGSC 10A6 / LMG 26770 / FZB42) (Bacillus amyloliquefaciens subsp. plantarum).